Consider the following 372-residue polypeptide: Queuine tRNA-ribosyltransferase (372 aa).

Aspartate 92 serves as the catalytic Proton acceptor. Residues 92-96 (DSGGY), aspartate 146, glutamine 188, and glycine 215 contribute to the substrate site. Residues 246–252 (GIGSLRE) are RNA binding. The active-site Nucleophile is aspartate 265. Residues 270–274 (TRLGR) form an RNA binding; important for wobble base 34 recognition region. Residues cysteine 303, cysteine 305, cysteine 308, and histidine 334 each contribute to the Zn(2+) site.

It belongs to the queuine tRNA-ribosyltransferase family. As to quaternary structure, homodimer. Within each dimer, one monomer is responsible for RNA recognition and catalysis, while the other monomer binds to the replacement base PreQ1. It depends on Zn(2+) as a cofactor.

It catalyses the reaction 7-aminomethyl-7-carbaguanine + guanosine(34) in tRNA = 7-aminomethyl-7-carbaguanosine(34) in tRNA + guanine. It functions in the pathway tRNA modification; tRNA-queuosine biosynthesis. Functionally, catalyzes the base-exchange of a guanine (G) residue with the queuine precursor 7-aminomethyl-7-deazaguanine (PreQ1) at position 34 (anticodon wobble position) in tRNAs with GU(N) anticodons (tRNA-Asp, -Asn, -His and -Tyr). Catalysis occurs through a double-displacement mechanism. The nucleophile active site attacks the C1' of nucleotide 34 to detach the guanine base from the RNA, forming a covalent enzyme-RNA intermediate. The proton acceptor active site deprotonates the incoming PreQ1, allowing a nucleophilic attack on the C1' of the ribose to form the product. After dissociation, two additional enzymatic reactions on the tRNA convert PreQ1 to queuine (Q), resulting in the hypermodified nucleoside queuosine (7-(((4,5-cis-dihydroxy-2-cyclopenten-1-yl)amino)methyl)-7-deazaguanosine). This chain is Queuine tRNA-ribosyltransferase, found in Prochlorococcus marinus (strain MIT 9312).